The following is a 407-amino-acid chain: Phosphopentomutase (407 aa).

Mn(2+) is bound by residues Asp10, Asp306, His311, Asp347, His348, and His359.

It belongs to the phosphopentomutase family. The cofactor is Mn(2+).

The protein localises to the cytoplasm. It carries out the reaction 2-deoxy-alpha-D-ribose 1-phosphate = 2-deoxy-D-ribose 5-phosphate. The catalysed reaction is alpha-D-ribose 1-phosphate = D-ribose 5-phosphate. It participates in carbohydrate degradation; 2-deoxy-D-ribose 1-phosphate degradation; D-glyceraldehyde 3-phosphate and acetaldehyde from 2-deoxy-alpha-D-ribose 1-phosphate: step 1/2. In terms of biological role, isomerase that catalyzes the conversion of deoxy-ribose 1-phosphate (dRib-1-P) and ribose 1-phosphate (Rib-1-P) to deoxy-ribose 5-phosphate (dRib-5-P) and ribose 5-phosphate (Rib-5-P), respectively. In Escherichia coli (strain UTI89 / UPEC), this protein is Phosphopentomutase.